We begin with the raw amino-acid sequence, 67 residues long: Protein AaeX (67 aa).

Helical transmembrane passes span 3 to 23 and 43 to 63; these read LFPVIVVFGLSFPPIFFELLL and FVWHPALFNTALYCCLFYLIS.

It belongs to the AaeX family.

Its subcellular location is the cell membrane. The sequence is that of Protein AaeX from Salmonella agona (strain SL483).